A 103-amino-acid chain; its full sequence is Small ribosomal subunit protein uS10 (103 aa).

This sequence belongs to the universal ribosomal protein uS10 family. Part of the 30S ribosomal subunit.

In terms of biological role, involved in the binding of tRNA to the ribosomes. The sequence is that of Small ribosomal subunit protein uS10 from Cutibacterium acnes (strain DSM 16379 / KPA171202) (Propionibacterium acnes).